The sequence spans 336 residues: DNA-directed RNA polymerase subunit alpha (336 aa).

The alpha N-terminal domain (alpha-NTD) stretch occupies residues 1–226 (MLIAQRPTLS…ELFGLARELN (226 aa)). Residues 241-336 (AALAADMALP…DDAAFSDDEL (96 aa)) form an alpha C-terminal domain (alpha-CTD) region.

The protein belongs to the RNA polymerase alpha chain family. Homodimer. The RNAP catalytic core consists of 2 alpha, 1 beta, 1 beta' and 1 omega subunit. When a sigma factor is associated with the core the holoenzyme is formed, which can initiate transcription.

The catalysed reaction is RNA(n) + a ribonucleoside 5'-triphosphate = RNA(n+1) + diphosphate. Functionally, DNA-dependent RNA polymerase catalyzes the transcription of DNA into RNA using the four ribonucleoside triphosphates as substrates. This Paenarthrobacter aurescens (strain TC1) protein is DNA-directed RNA polymerase subunit alpha.